The primary structure comprises 266 residues: Putative carbamate hydrolase RutD (266 aa).

One can recognise an AB hydrolase-1 domain in the interval 14–119; the sequence is PVVVLSAGLG…LVNGWLSLSP (106 aa).

It belongs to the AB hydrolase superfamily. Hydrolase RutD family.

The enzyme catalyses carbamate + 2 H(+) = NH4(+) + CO2. Its function is as follows. Involved in pyrimidine catabolism. May facilitate the hydrolysis of carbamate, a reaction that can also occur spontaneously. This Klebsiella pneumoniae subsp. pneumoniae (strain ATCC 700721 / MGH 78578) protein is Putative carbamate hydrolase RutD.